Here is a 228-residue protein sequence, read N- to C-terminus: Putative L-ribulose-5-phosphate 4-epimerase UlaF (228 aa).

Residues 26-27 (GN), 43-44 (SG), and 72-73 (SS) each bind substrate. The Zn(2+) site is built by aspartate 74, histidine 93, and histidine 95. Residue aspartate 118 is the Proton donor/acceptor of the active site. Histidine 167 lines the Zn(2+) pocket. The active-site Proton donor/acceptor is tyrosine 225.

This sequence belongs to the aldolase class II family. AraD/FucA subfamily. It depends on Zn(2+) as a cofactor.

The catalysed reaction is L-ribulose 5-phosphate = D-xylulose 5-phosphate. The protein operates within cofactor degradation; L-ascorbate degradation; D-xylulose 5-phosphate from L-ascorbate: step 4/4. Catalyzes the isomerization of L-ribulose 5-phosphate to D-xylulose 5-phosphate. Is involved in the anaerobic L-ascorbate utilization. The protein is Putative L-ribulose-5-phosphate 4-epimerase UlaF of Shigella boydii serotype 4 (strain Sb227).